We begin with the raw amino-acid sequence, 669 residues long: DNA mismatch repair protein MutL (669 aa).

Disordered stretches follow at residues 354–402 (NRPA…ENPY) and 448–479 (TVSH…PLES). Over residues 448 to 468 (TVSHDSPPNRTAPDATTSSSK) the composition is skewed to polar residues.

Belongs to the DNA mismatch repair MutL/HexB family.

In terms of biological role, this protein is involved in the repair of mismatches in DNA. It is required for dam-dependent methyl-directed DNA mismatch repair. May act as a 'molecular matchmaker', a protein that promotes the formation of a stable complex between two or more DNA-binding proteins in an ATP-dependent manner without itself being part of a final effector complex. The polypeptide is DNA mismatch repair protein MutL (Pectobacterium carotovorum subsp. carotovorum (strain PC1)).